Consider the following 748-residue polypeptide: Long-chain-alcohol oxidase FAO4B (748 aa).

Basic residues predominate over residues 1-18; sequence MEDVRRRNRGHPLLRSKK. Residues 1–25 are disordered; that stretch reads MEDVRRRNRGHPLLRSKKRGEGYNH. Helical transmembrane passes span 89 to 109 and 140 to 160; these read IILMILSFRFGTLLLCGSLCL and FLLPFRITFFLAKFYTLFYFF. An FAD-binding site is contributed by 238 to 253; the sequence is CDAVVVGSGSGGGVAA. Catalysis depends on His-679, which acts as the Proton acceptor.

It belongs to the GMC oxidoreductase family.

Its subcellular location is the membrane. The enzyme catalyses a long-chain primary fatty alcohol + O2 = a long-chain fatty aldehyde + H2O2. In terms of biological role, long-chain fatty alcohol oxidase involved in the omega-oxidation pathway of lipid degradation. This chain is Long-chain-alcohol oxidase FAO4B (FAO4B), found in Arabidopsis thaliana (Mouse-ear cress).